Reading from the N-terminus, the 513-residue chain is MSLNPALKFRDFIQVLKNEGDLIEIDTEVDPNLEVGAITRKAYENKLAAPLFNNLKQDPENIDPKNLFRILGCPGGLRGFGNDHARIALHLGLDSQTPMKEIIDFLVANRNPKKYIPPVLVPNDQSPHKKHHLTKEQIDLTKLPVPLLHHGDGGKFIQTYGMWVLQTPDKSWTNWSIARGMVHDSKSITGLVINPQHVKQVSDAWVAAGKGDKIPFALCFGVPPAAILVSSMPIPDGATEAEYIGGLCNQAVPVVKCETNDLEVPADCEMVFEGYLDRDTLVREGPFGEMHGYCFPKDHHTQPLYRVNHISYRDQAIMPISNPGLCTDETHTLIGGLVSAETKYLISQHPVLSKIVEDVFTPYEAQALWLAVKINTHELVKLKTNAKELSNLVGDFLFRSKECYKVCSILHEIILVGDDIDIFDFKQLIWAYTTRHTPVQDQLYFDDVKPFALAPFASQGPLIKTRQGGKCVTTCIFPKQFTDPDFEFVTCNFNGYPEEVKNKISQNWDKYYK.

Residues Asn-174, His-197, and Glu-240 each contribute to the Mn(2+) site. Prenylated FMN contacts are provided by residues 174–179 (NWSIAR), 196–197 (QH), and Glu-240. Glu-289 acts as the Proton donor in catalysis. Lys-405 is a prenylated FMN binding site.

This sequence belongs to the UbiD family. UbiD-like/FDC subfamily. Homodimer. May form higher order oligomers. Requires Mn(2+) as cofactor. Prenylated FMN serves as cofactor.

The protein resides in the cytoplasm. It carries out the reaction (E)-4-coumarate + H(+) = 4-vinylphenol + CO2. The catalysed reaction is (E)-cinnamate + H(+) = styrene + CO2. The enzyme catalyses (E)-ferulate + H(+) = 2-methoxy-4-vinylphenol + CO2. In terms of biological role, catalyzes the reversible decarboxylation of aromatic carboxylic acids like ferulic acid, p-coumaric acid or cinnamic acid, producing the corresponding vinyl derivatives 4-vinylphenol, 4-vinylguaiacol, and styrene, respectively, which play the role of aroma metabolites. The protein is Ferulic acid decarboxylase 1 of Candida dubliniensis (strain CD36 / ATCC MYA-646 / CBS 7987 / NCPF 3949 / NRRL Y-17841) (Yeast).